Reading from the N-terminus, the 449-residue chain is Baeyer-Villiger oxidase GME11358 (449 aa).

It belongs to the questin oxidase family.

It participates in secondary metabolite biosynthesis. Functionally, baeyer-Villiger oxidase; part of the gene cluster that mediates the biosynthesis of dibenzodioxocinones such as pestalotiollide B, a novel class of inhibitors against cholesterol ester transfer protein (CEPT). The biosynthesis initiates from condensation of acetate and malonate units catalyzed by the non-reducing PKS pks8/GME11356. Pks8/GME11356 lacks a thioesterase (TE) domain, which is important to the cyclizing of the third ring of atrochrysone carboxylic acid, and the esterase GME11355 might play the role of TE and catalyzes the cyclization reaction of the C ring. The lactamase-like protein GME11357 (or other beta-lactamases in Pestalotiopsis microspora) probably hydrolyzes the thioester bond between the ACP of pks8/GME11356 and the intermediate to release atrochrysone carboxylic acid, which is spontaneously dehydrates to form endocrocin anthrone. Endocrocin anthrone is further converted to emodin via the endocrocin intermediate. Emodin is then oxidized by several enzymes such as the Baeyer-Villiger oxidase GME11358, the oxidoreductase GME11367, the short chain dehydrogenase/reductase GME11373, as well as by other oxidoreductases from the cluster, to modify the A and C rings and open the B ring, and finally yield monodictyphenone. The prenyltransferase GME11375 may catalyze the addition reaction between the C5 side chains and the carbon bone of dibenzodioxocinones. The remaining biochemical reactions to the final product dibenzodioxocinones should be methylation catalyzed by methyltransferase GME11366 and reduction and lactonization reaction catalyzed by a series of oxidordeuctases. The sequence is that of Baeyer-Villiger oxidase GME11358 from Pestalotiopsis microspora.